A 187-amino-acid polypeptide reads, in one-letter code: ATP synthase subunit b 2 (187 aa).

The chain crosses the membrane as a helical span at residues 32–52; the sequence is TTFAAQILWLAIAFGLLYYLM.

The protein belongs to the ATPase B chain family. F-type ATPases have 2 components, F(1) - the catalytic core - and F(0) - the membrane proton channel. F(1) has five subunits: alpha(3), beta(3), gamma(1), delta(1), epsilon(1). F(0) has three main subunits: a(1), b(2) and c(10-14). The alpha and beta chains form an alternating ring which encloses part of the gamma chain. F(1) is attached to F(0) by a central stalk formed by the gamma and epsilon chains, while a peripheral stalk is formed by the delta and b chains.

It localises to the cell inner membrane. Functionally, f(1)F(0) ATP synthase produces ATP from ADP in the presence of a proton or sodium gradient. F-type ATPases consist of two structural domains, F(1) containing the extramembraneous catalytic core and F(0) containing the membrane proton channel, linked together by a central stalk and a peripheral stalk. During catalysis, ATP synthesis in the catalytic domain of F(1) is coupled via a rotary mechanism of the central stalk subunits to proton translocation. Component of the F(0) channel, it forms part of the peripheral stalk, linking F(1) to F(0). The b'-subunit is a diverged and duplicated form of b found in plants and photosynthetic bacteria. The chain is ATP synthase subunit b 2 (atpF2) from Methylobacterium sp. (strain 4-46).